The sequence spans 308 residues: D-alanine--D-alanine ligase (308 aa).

The 198-residue stretch at 105–302 (KAIFRSLGLA…FPDLCERILD (198 aa)) folds into the ATP-grasp domain. Residue 133–188 (DLPFGLPCVVKPAGEGSSVGVHLVNEAAELGPACRDAASHAGDVIVERYVKGTEVD) coordinates ATP. Asp256, Glu269, and Asn271 together coordinate Mg(2+).

The protein belongs to the D-alanine--D-alanine ligase family. It depends on Mg(2+) as a cofactor. Mn(2+) serves as cofactor.

The protein resides in the cytoplasm. The catalysed reaction is 2 D-alanine + ATP = D-alanyl-D-alanine + ADP + phosphate + H(+). It functions in the pathway cell wall biogenesis; peptidoglycan biosynthesis. Cell wall formation. This chain is D-alanine--D-alanine ligase, found in Anaeromyxobacter sp. (strain K).